A 422-amino-acid chain; its full sequence is Hexuronate transporter (422 aa).

11 helical membrane passes run 9-29 (VILFLFLAGVINYLDRSALSI), 45-65 (MGLIFSSFSIGYAIFNFLGGV), 82-102 (VWSLFSGAVALAFGFVSLLII), 141-161 (TPLGGAISGPIVGMIAVAFSW), 163-183 (VSFVLIMIIGLIWAVLWFKFV), 219-239 (LFTAFAFFAYNYILFFFLTWF), 256-276 (VITVIPWILGFIGLAAGGFVS), 294-314 (VVLVTCLFSSAVLIGFAGLVA), 321-341 (TLVALSVFFLYLTGAIYWAVI), 356-376 (FMHFLANTAGIIGPALTGFIV), and 381-401 (TFSGAFLLAGGLAVFASLAVI).

Belongs to the major facilitator superfamily. Phthalate permease family.

The protein localises to the cell membrane. It catalyses the reaction aldehydo-D-glucuronate(in) + H(+)(in) = aldehydo-D-glucuronate(out) + H(+)(out). The enzyme catalyses aldehydo-D-galacturonate(out) + H(+)(out) = aldehydo-D-galacturonate(in) + H(+)(in). In terms of biological role, transport of aldohexuronates such as D-glucuronate and D-galacturonate. This Bacillus subtilis (strain 168) protein is Hexuronate transporter.